Here is a 233-residue protein sequence, read N- to C-terminus: Gamma-glutamyl-hercynylcysteine sulfoxide hydrolase (233 aa).

C2 serves as the catalytic Nucleophile. Residues 2-233 (CRHLGWLGAQ…TALDRAKGPR (232 aa)) form the Glutamine amidotransferase type-2 domain.

It carries out the reaction gamma-L-glutamyl-hercynylcysteine S-oxide + H2O = S-(hercyn-2-yl)-L-cysteine S-oxide + L-glutamate. It participates in amino-acid biosynthesis; ergothioneine biosynthesis. Its function is as follows. Catalyzes the hydrolysis of the gamma-glutamyl amide bond of hercynyl-gamma-L-glutamyl-L-cysteine sulfoxide to produce hercynylcysteine sulfoxide, a step in the biosynthesis pathway of ergothioneine. Ergothioneine is an antioxidant that protects mycobacteria from oxidative stress. The polypeptide is Gamma-glutamyl-hercynylcysteine sulfoxide hydrolase (egtC) (Mycobacterium tuberculosis (strain ATCC 25618 / H37Rv)).